Reading from the N-terminus, the 596-residue chain is CRISPR-associated DNA-binding protein Cas12m (596 aa).

The tract at residues 19–53 is recognition domain (REC1-N); it reads EVLRQQLWLAHNLREDLVSLQLAYDDDLKAIWSSY. Residues 54-121 are recognition domain (REC2); that stretch reads PDVAQAEDTM…RDAIAVVKDD (68 aa). Coiled coils occupy residues 55 to 83 and 91 to 117; these read DVAQAEDTMAAAEADAVALSERVKQARIE and TELTQQLRDAKKRLKDARQARRDAIAV. The segment at 122-190 is recognition domain (REC1-C); it reads AAERRKARSD…LRHHRFDGSG (69 aa). The wedge domain (WED) stretch occupies residues 191–302; that stretch reads TIAVQLQRQA…RAKLCVTARI (112 aa). The tract at residues 303-313 is linker; it reads GDTEPVTSGPT. The interval 314–541 is ruvC-I; sequence VALHLGWRST…RDGVPVTIVA (228 aa). Position 317 (His-317) interacts with Mg(2+). Residues 541–577 are target nucleic-acid binding (TNB); sequence AAADFTRTHSRCGHVNPADDRYLSNPVRCDGCGAMYD. His-549, Cys-552, Cys-569, and Cys-572 together coordinate Zn(2+). The interval 578-596 is ruvC-II; that stretch reads QDRSFVTLMLRAATAPSNP. Mg(2+) is bound at residue Asp-579.

It belongs to the CRISPR-associated DNA-binding protein Cas12m family. In terms of assembly, binds crRNA and target dsDNA as a monomer. The cofactor is Mg(2+). Zn(2+) is required as a cofactor.

CRISPR (clustered regularly interspaced short palindromic repeat), is an adaptive immune system that provides protection against mobile genetic elements (viruses, transposable elements and conjugative plasmids). CRISPR clusters contain sequences complementary to antecedent mobile elements and target invading nucleic acids. CRISPR clusters are transcribed and processed into CRISPR RNA (crRNA). Recognizes a short motif in the CRISPR repeat sequences (the 5' PAM or protospacer adjacent motif, 5'-TTN-3' in this organism) to help distinguish self versus nonself, as targets within the bacterial CRISPR locus do not have PAMs. Upon expression in E.coli as a CRISPR locus inhibits plasmid propagation when targeted to regions essential for plasmid propagation (replication origin and dnaA). The crRNA-Cas12m complex inhibits transcription from target DNA leading to gene silencing. Cas12m-crRNA binds DNA in a PAM-dependent, crRNA-guided fashion. Binds a 17-bp crRNA-ss-target DNA heteroduplex, in a 56 nucleotide crRNA. No dsDNA, ssDNA or RNA nuclease activity is seen for the crRNA-Cas12m complex. Is required to process pre-crRNA to mature crRNA without a tracrRNA. Upon expression in E.coli as a CRISPR region preferentially binds to its associated crRNA. This is CRISPR-associated DNA-binding protein Cas12m from Mycolicibacterium mucogenicum (Mycobacterium mucogenicum).